The chain runs to 128 residues: Aspartate 1-decarboxylase (128 aa).

Serine 25 functions as the Schiff-base intermediate with substrate; via pyruvic acid in the catalytic mechanism. Serine 25 carries the pyruvic acid (Ser) modification. Threonine 57 contacts substrate. Tyrosine 58 serves as the catalytic Proton donor. 73–75 (GAA) provides a ligand contact to substrate.

Belongs to the PanD family. As to quaternary structure, heterooctamer of four alpha and four beta subunits. Pyruvate is required as a cofactor. Is synthesized initially as an inactive proenzyme, which is activated by self-cleavage at a specific serine bond to produce a beta-subunit with a hydroxyl group at its C-terminus and an alpha-subunit with a pyruvoyl group at its N-terminus.

It localises to the cytoplasm. It carries out the reaction L-aspartate + H(+) = beta-alanine + CO2. Its pathway is cofactor biosynthesis; (R)-pantothenate biosynthesis; beta-alanine from L-aspartate: step 1/1. Functionally, catalyzes the pyruvoyl-dependent decarboxylation of aspartate to produce beta-alanine. The polypeptide is Aspartate 1-decarboxylase (Chlorobium limicola (strain DSM 245 / NBRC 103803 / 6330)).